A 462-amino-acid chain; its full sequence is MALSMKMRANARVVSGRRVAAVAPRVVPFSSVARPVLRSTFAPEVSIDIRRAGRSRIVVEAVKKSVGDLGKADLEGKRVFVRADLNVPLDKKTLAITDDTRIRAAVPTLKYLLDNGAKVLLTSHLGRPKGGPEDKYRLTPVVARLSELLGKEVKKVDDCIGPSVEQAVASLKSGELLLLENVRFYKEEEKNDPEFAKKLASNADLYVNDAFGTAHRAHASTEGVTKFLKPSVAGFLLQKELDYLDGAVSAPKRPFVAIVGGSKVSSKITVIEKLMEKCDKIIIGGGMIFTFYKARGLKVGSSLVEEDKLELAKNLEAIAKAKGVQLLLPSDVVVADKFDANANTQTVSVEAIPDGWMGLDIGPDSIKTFQDALADAKTVVWNGPMGVFEFPKFAVGTVAIANTLSELTPKGAITIIGGGDSVAAVEQAGVAEKMSHISTGGGASLELLEGKVLPGVAALDEK.

A chloroplast-targeting transit peptide spans 1–61 (MALSMKMRAN…AGRSRIVVEA (61 aa)). Residues Ala-83, Asp-84, Asn-86, Arg-101, Ser-123, His-124, Gly-126, Arg-127, Arg-183, His-215, and Arg-216 each contribute to the (2R)-3-phosphoglycerate site. Gly-261 provides a ligand contact to ADP. Residue Gly-261 participates in CDP binding. AMP is bound by residues Lys-263 and Lys-267. Residue Lys-267 coordinates ATP. Gly-285 contacts ADP. Gly-285 contributes to the CDP binding site. The AMP site is built by Gly-286 and Gly-358. Residues Gly-286 and Gly-358 each coordinate ATP. CDP is bound by residues Gly-383 and Phe-388. Phe-388 contributes to the ADP binding site. Residue Glu-389 participates in AMP binding. ATP-binding residues include Glu-389, Asp-420, and Ser-421. Asp-420 is a binding site for Mg(2+).

The protein belongs to the phosphoglycerate kinase family. Monomer. It depends on Mg(2+) as a cofactor.

It localises to the plastid. The protein localises to the chloroplast. The catalysed reaction is (2R)-3-phosphoglycerate + ATP = (2R)-3-phospho-glyceroyl phosphate + ADP. Its pathway is carbohydrate biosynthesis; Calvin cycle. The sequence is that of Phosphoglycerate kinase, chloroplastic (PGK) from Volvox carteri (Green alga).